Reading from the N-terminus, the 241-residue chain is Thymidylate kinase (241 aa).

17 to 24 (GGEGAGKT) serves as a coordination point for ATP.

It belongs to the thymidylate kinase family.

The catalysed reaction is dTMP + ATP = dTDP + ADP. Its function is as follows. Phosphorylation of dTMP to form dTDP in both de novo and salvage pathways of dTTP synthesis. The chain is Thymidylate kinase from Thermosynechococcus vestitus (strain NIES-2133 / IAM M-273 / BP-1).